The sequence spans 189 residues: Peptidyl-tRNA hydrolase (189 aa).

Y14 serves as a coordination point for tRNA. The active-site Proton acceptor is H19. Residues Y64, N66, and N112 each coordinate tRNA.

It belongs to the PTH family. In terms of assembly, monomer.

It is found in the cytoplasm. It catalyses the reaction an N-acyl-L-alpha-aminoacyl-tRNA + H2O = an N-acyl-L-amino acid + a tRNA + H(+). Its function is as follows. Hydrolyzes ribosome-free peptidyl-tRNAs (with 1 or more amino acids incorporated), which drop off the ribosome during protein synthesis, or as a result of ribosome stalling. In terms of biological role, catalyzes the release of premature peptidyl moieties from peptidyl-tRNA molecules trapped in stalled 50S ribosomal subunits, and thus maintains levels of free tRNAs and 50S ribosomes. The sequence is that of Peptidyl-tRNA hydrolase from Clostridium botulinum (strain Loch Maree / Type A3).